The primary structure comprises 963 residues: Ras-interacting protein 1 (963 aa).

Basic and acidic residues predominate over residues methionine 1–glycine 10. Disordered stretches follow at residues methionine 1–glycine 22 and leucine 35–tryptophan 118. Residues serine 41–serine 57 are compositionally biased toward low complexity. At arginine 94 the chain carries Omega-N-methylarginine. A compositionally biased stretch (gly residues) spans serine 96–glycine 113. The region spanning proline 144–glutamate 259 is the Ras-associating domain. Phosphoserine is present on residues serine 188, serine 280, and serine 292. The segment at alanine 267–alanine 356 is disordered. Residues alanine 290–glycine 301 show a composition bias toward low complexity. Residues proline 302–glycine 313 show a composition bias toward gly residues. Positions asparagine 320–glutamine 333 are enriched in low complexity. Phosphoserine occurs at positions 326, 328, 331, and 419. One can recognise a Dilute domain in the interval glycine 600 to threonine 897.

Interacts with Ras family members that have been activated by GTP binding. Interacts with HRAS, RAP1A, RAP2, RRAS, RAF1 and RRAS2. Interacts with MYH9 and ARHGAP29. Highly expressed in heart. Detected at lower levels in placenta and pancreas.

It is found in the cytoplasm. The protein resides in the perinuclear region. Its subcellular location is the golgi apparatus. The protein localises to the golgi stack. Functionally, required for the proper formation of vascular structures that develop via both vasculogenesis and angiogenesis. Acts as a critical and vascular-specific regulator of GTPase signaling, cell architecture, and adhesion, which is essential for endothelial cell morphogenesis and blood vessel tubulogenesis. Regulates the activity of Rho GTPases in part by recruiting ARHGAP29 and suppressing RhoA signaling and dampening ROCK and MYH9 activities in endothelial cells. May act as effector for Golgi-bound HRAS and other Ras-like proteins. May promote HRAS-mediated transformation. Negative regulator of amino acid starvation-induced autophagy. This chain is Ras-interacting protein 1 (RASIP1), found in Homo sapiens (Human).